The chain runs to 375 residues: MHCARYSTGTCRSCQWLEKPYPQQLSDKQQHLEDLLQPHAVQRWLPVQPSAQTAFRNKAKMVVSGSVERPLLGMLHRDGTAVDLCDCPLYPTSFAPVFDVLKVFIARAGLTPYNVARRRGELKYLLLTESTQRGTFMLRFVLRSETKLAQLRAAMPWLQQQLPQLEVISANIQPVHQAIMEGKTEIILSDAAALAEQFNQVPLYIRPQSFFQTNPQVAAALYATARDWVAELKITSMWDLFCGVGGFGLHCASSEMRLTGIEISAEAIACARRSAEQLGLKHVEFQALDSTQFATAKAEIPDLVLVNPPRRGIGSELCSYLSRMAPDYILYSSCNAESMAKDMTELANYRALRVQLFDMFPHTAHYEVLTLLKRA.

Residues cysteine 3, cysteine 11, cysteine 14, and cysteine 87 each coordinate [4Fe-4S] cluster. 4 residues coordinate S-adenosyl-L-methionine: glutamine 212, phenylalanine 241, glutamate 262, and asparagine 307. The active-site Nucleophile is cysteine 334.

This sequence belongs to the class I-like SAM-binding methyltransferase superfamily. RNA M5U methyltransferase family. RlmC subfamily.

It carries out the reaction uridine(747) in 23S rRNA + S-adenosyl-L-methionine = 5-methyluridine(747) in 23S rRNA + S-adenosyl-L-homocysteine + H(+). In terms of biological role, catalyzes the formation of 5-methyl-uridine at position 747 (m5U747) in 23S rRNA. The protein is 23S rRNA (uracil(747)-C(5))-methyltransferase RlmC of Pectobacterium atrosepticum (strain SCRI 1043 / ATCC BAA-672) (Erwinia carotovora subsp. atroseptica).